Consider the following 1080-residue polypeptide: Presequence protease 2, chloroplastic/mitochondrial (1080 aa).

A chloroplast and mitochondrion-targeting transit peptide spans 1–84 (MLRSLTCSST…NGQFSRLSIR (84 aa)). Histidine 161 is a binding site for Zn(2+). The Proton acceptor role is filled by glutamate 164. Histidine 165 is a Zn(2+) binding site. The active site involves glutamate 239. Glutamate 261 is a Zn(2+) binding site. Arginine 704 contributes to the Mg(2+) binding site.

It belongs to the peptidase M16 family. PreP subfamily. As to quaternary structure, homodimer. Zn(2+) is required as a cofactor. The cofactor is Mg(2+). In terms of tissue distribution, expressed in leaves, flowers and roots, but not detected in siliques and shoots.

Its subcellular location is the plastid. The protein resides in the chloroplast stroma. It localises to the mitochondrion matrix. With respect to regulation, completely inhibited by the metal chelator orthophenanthroline. ATP-independent protease that degrades both mitochondrial and chloroplastic transit peptides after their cleavage. Also degrades other unstructured peptides. Specific for peptides in the range of 10 to 65 residues. Shows a preference for cleavage after small polar residues and before basic residues, but without any positional preference. The chain is Presequence protease 2, chloroplastic/mitochondrial (PREP2) from Arabidopsis thaliana (Mouse-ear cress).